Reading from the N-terminus, the 295-residue chain is Acetylglutamate kinase (295 aa).

Residues 67-68 (GG), arginine 89, and asparagine 191 each bind substrate.

Belongs to the acetylglutamate kinase family. ArgB subfamily.

Its subcellular location is the cytoplasm. It catalyses the reaction N-acetyl-L-glutamate + ATP = N-acetyl-L-glutamyl 5-phosphate + ADP. It functions in the pathway amino-acid biosynthesis; L-arginine biosynthesis; N(2)-acetyl-L-ornithine from L-glutamate: step 2/4. In terms of biological role, catalyzes the ATP-dependent phosphorylation of N-acetyl-L-glutamate. The protein is Acetylglutamate kinase of Nitrosomonas eutropha (strain DSM 101675 / C91 / Nm57).